Here is a 2325-residue protein sequence, read N- to C-terminus: Otogelin-like protein (2325 aa).

The N-terminal stretch at 1 to 22 (MVPWRALSLPILLVSLRGYVCA) is a signal peptide. The VWFD 1 domain maps to 112–288 (GICKTWGQYH…VLTPDDTKCV (177 aa)). 2 disulfide bridges follow: cysteine 114-cysteine 248 and cysteine 136-cysteine 287. N-linked (GlcNAc...) asparagine glycosylation is present at asparagine 425. The region spanning 472 to 645 (VQCSVVGDSH…HAWRVSSTCF (174 aa)) is the VWFD 2 domain. 3 disulfides stabilise this stretch: cysteine 474/cysteine 609, cysteine 496/cysteine 644, and cysteine 518/cysteine 526. One can recognise a TIL 1 domain in the interval 736–791 (CQKGMLYHHCSSLCLRSCTSLSSPEQCKDDCAEGCNCPEGKFYEETLNFCVPIYHC). Asparagine 817 and asparagine 867 each carry an N-linked (GlcNAc...) asparagine glycan. The VWFD 3 domain maps to 937 to 1114 (AVCTVYGDRH…DLMEALKPCE (178 aa)). Intrachain disulfides connect cysteine 939/cysteine 1069, cysteine 961/cysteine 1113, and cysteine 983/cysteine 990. Residue asparagine 1280 is glycosylated (N-linked (GlcNAc...) asparagine). Residues 1366-1418 (RYEPCATPCFKTCSDPEALACTFLPPVEGCLPYCPKNMILDETTLKCVHPEDC) form the TIL 2 domain. The region spanning 1506–1695 (CRCSMLSELS…SWEIEKSFEV (190 aa)) is the VWFD 4 domain. 2 cysteine pairs are disulfide-bonded: cysteine 1508–cysteine 1655 and cysteine 1549–cysteine 1571. N-linked (GlcNAc...) asparagine glycans are attached at residues asparagine 1576 and asparagine 2170. 4 disulfide bridges follow: cysteine 2233–cysteine 2289, cysteine 2254–cysteine 2303, cysteine 2265–cysteine 2320, and cysteine 2269–cysteine 2322. The 93-residue stretch at 2233-2325 (CKREERICQK…EPIDCTCQWN (93 aa)) folds into the CTCK domain. The N-linked (GlcNAc...) asparagine glycan is linked to asparagine 2296.

Belongs to the otogelin family.

The protein resides in the secreted. The protein is Otogelin-like protein (Otogl) of Mus musculus (Mouse).